Reading from the N-terminus, the 382-residue chain is Mannitol-1-phosphate 5-dehydrogenase (382 aa).

3–14 (ALHFGAGNIGRG) contacts NAD(+).

It belongs to the mannitol dehydrogenase family.

The catalysed reaction is D-mannitol 1-phosphate + NAD(+) = beta-D-fructose 6-phosphate + NADH + H(+). The sequence is that of Mannitol-1-phosphate 5-dehydrogenase from Salmonella paratyphi A (strain ATCC 9150 / SARB42).